The chain runs to 609 residues: Aminopeptidase ltah-1.1 (609 aa).

Residues 137–139 (QCQ) and 268–273 (PFGGME) each bind substrate. His297 is a binding site for Zn(2+). The active-site Proton acceptor is Glu298. His301 and Glu320 together coordinate Zn(2+). Tyr387 (proton donor) is an active-site residue. 564-566 (RMK) provides a ligand contact to substrate.

This sequence belongs to the peptidase M1 family. Zn(2+) is required as a cofactor.

The protein resides in the cytoplasm. The catalysed reaction is Release of N-terminal Arg and Lys from oligopeptides when P1' is not Pro. Also acts on arylamides of Arg and Lys.. Aminopeptidase which preferentially removes N-terminal Arg and Lys residues from peptides and proteins. In Caenorhabditis elegans, this protein is Aminopeptidase ltah-1.1.